Here is a 780-residue protein sequence, read N- to C-terminus: ATP-dependent 6-phosphofructokinase, muscle type (780 aa).

Residue Thr-2 is modified to N-acetylthreonine. The N-terminal catalytic PFK domain 1 stretch occupies residues 2 to 390 (THEEHHAAKT…NWEVYKLLAH (389 aa)). ATP is bound by residues Gly-25, 88–89 (RC), and 118–121 (GDGS). Asp-119 contacts Mg(2+). Ser-133 bears the Phosphoserine mark. Residues 164-166 (SID), Arg-201, 208-210 (MGR), Glu-264, Arg-292, and 298-301 (HVQR) each bind substrate. Asp-166 (proton acceptor) is an active-site residue. Residue Ser-377 is modified to Phosphoserine. Residues 391–401 (VRPPVSKSGSH) are interdomain linker. Residues 402–780 (TVAVMNVGAP…TRKRSGEAAV (379 aa)) form a C-terminal regulatory PFK domain 2 region. Beta-D-fructose 2,6-bisphosphate contacts are provided by residues Arg-471 and 528 to 532 (TVSNN). Residue Ser-530 is glycosylated (O-linked (GlcNAc) serine). Lys-557 is subject to N6-(2-hydroxyisobutyryl)lysine. Residues Arg-566, 573–575 (MGG), Glu-629, Arg-655, and 661–664 (HMQQ) contribute to the beta-D-fructose 2,6-bisphosphate site. A Phosphoserine modification is found at Ser-667. Arg-735 lines the beta-D-fructose 2,6-bisphosphate pocket. Ser-775 carries the phosphoserine modification.

Belongs to the phosphofructokinase type A (PFKA) family. ATP-dependent PFK group I subfamily. Eukaryotic two domain clade 'E' sub-subfamily. In terms of assembly, homo- and heterotetramers. Phosphofructokinase (PFK) enzyme functions as a tetramer composed of different combinations of 3 types of subunits, called PFKM (where M stands for Muscle), PFKL (Liver) and PFKP (Platelet). The composition of the PFK tetramer differs according to the tissue type it is present in. In muscles, it is composed of 4 PFKM subunits (also called M4). In the liver, the predominant form is a tetramer of PFKL subunits (L4). In erythrocytes, both PFKM and PFKL subunits randomly tetramerize to form M4, L4 and other combinations (ML3, M2L2, M3L). The kinetic and regulatory properties of the tetrameric enzyme are dependent on the subunit composition, hence can vary across tissues. Interacts (via C-terminus) with HK1 (via N-terminal spermatogenic cell-specific region). Mg(2+) is required as a cofactor. In terms of processing, glcNAcylation decreases enzyme activity.

It localises to the cytoplasm. It carries out the reaction beta-D-fructose 6-phosphate + ATP = beta-D-fructose 1,6-bisphosphate + ADP + H(+). It functions in the pathway carbohydrate degradation; glycolysis; D-glyceraldehyde 3-phosphate and glycerone phosphate from D-glucose: step 3/4. Its activity is regulated as follows. Allosterically activated by ADP, AMP, or fructose 2,6-bisphosphate, and allosterically inhibited by ATP or citrate. Catalyzes the phosphorylation of D-fructose 6-phosphate to fructose 1,6-bisphosphate by ATP, the first committing step of glycolysis. The polypeptide is ATP-dependent 6-phosphofructokinase, muscle type (PFKM) (Homo sapiens (Human)).